A 1077-amino-acid polypeptide reads, in one-letter code: Semaphorin-5A (1077 aa).

A signal peptide spans 1 to 21 (MKGACILAWLFSSLGVWRLAR). The Extracellular portion of the chain corresponds to 22–971 (PETQDPAKCQ…RCGEFNMFHM (950 aa)). Residues 35-484 (HPVVSYKEIG…LQEHVAKIPL (450 aa)) form the Sema domain. 2 disulfides stabilise this stretch: Cys-104–Cys-114 and Cys-131–Cys-140. Residues Asn-147, Asn-168, Asn-227, and Asn-277 are each glycosylated (N-linked (GlcNAc...) asparagine). Intrachain disulfides connect Cys-254–Cys-357 and Cys-278–Cys-320. Asn-323 and Asn-367 each carry an N-linked (GlcNAc...) asparagine glycan. 2 disulfides stabilise this stretch: Cys-487–Cys-504 and Cys-496–Cys-513. Asn-536 and Asn-591 each carry an N-linked (GlcNAc...) asparagine glycan. TSP type-1 domains are found at residues 540 to 593 (DGSF…TNCS), 595 to 651 (NGGW…LLCP), 653 to 702 (HVFW…NACP), 707 to 765 (TTPW…GCST), 784 to 839 (NGAW…LPCP), 841 to 896 (DGVW…QTCP), and 897 to 944 (ESWS…VFDS). Cystine bridges form between Cys-607/Cys-644, Cys-611/Cys-650, Cys-622/Cys-634, Cys-665/Cys-696, Cys-669/Cys-701, and Cys-680/Cys-686. Asn-717 carries N-linked (GlcNAc...) asparagine glycosylation. 6 disulfides stabilise this stretch: Cys-796-Cys-833, Cys-800-Cys-838, Cys-811-Cys-823, Cys-853-Cys-890, Cys-857-Cys-895, and Cys-868-Cys-880. A glycan (N-linked (GlcNAc...) asparagine) is linked at Asn-933. Residues 972–992 (FHMMAVGLSSSILGCLLTLLV) traverse the membrane as a helical segment. Residues 993 to 1077 (YTYCQRYQQQ…FTDLNNYDEY (85 aa)) are Cytoplasmic-facing.

It belongs to the semaphorin family. Binds PLXNB3. In adult, detected in liver, brain, kidney, heart, lung and spleen.

The protein resides in the membrane. Functionally, bifunctional axonal guidance cue regulated by sulfated proteoglycans; attractive effects result from interactions with heparan sulfate proteoglycans (HSPGs), while the inhibitory effects depend on interactions with chondroitin sulfate proteoglycans (CSPGs). Ligand for receptor PLXNB3. In glioma cells, SEMA5A stimulation of PLXNB3 results in the disassembly of F-actin stress fibers, disruption of focal adhesions and cellular collapse as well as inhibition of cell migration and invasion through ARHGDIA-mediated inactivation of RAC1. May promote angiogenesis by increasing endothelial cell proliferation and migration and inhibiting apoptosis. This is Semaphorin-5A (Sema5a) from Mus musculus (Mouse).